The following is a 265-amino-acid chain: Synaptoporin (265 aa).

Topologically, residues 1 to 4 are cytoplasmic; that stretch reads MCMV. One can recognise an MARVEL domain in the interval 1–202; it reads MCMVIFAPLF…NIWFVFKETG (202 aa). Residues 5 to 25 form a helical membrane-spanning segment; it reads IFAPLFAIFAFATCGGYSGGL. The Vesicular segment spans residues 26-81; it reads RLSVDCVNKTESNLSIDIAFAYPFRLHQVTFEVPTCEGKERQKLALVGDSSSSAEF. Asn-33 and Asn-38 each carry an N-linked (GlcNAc...) asparagine glycan. A helical transmembrane segment spans residues 82 to 102; the sequence is FVTVAVFAFLYSLAATVVYIF. Residues 103–114 lie on the Cytoplasmic side of the membrane; it reads FQNKYRENNRGP. Residues 115–135 traverse the membrane as a helical segment; the sequence is LIDFIVTVVFSFLWLVGSSAW. Residues 136–177 are Vesicular-facing; the sequence is AKGLSDVKVATDPKEVLLLMSACKQPSNKCMAVHSPVMSSLN. Asn-177 carries an N-linked (GlcNAc...) asparagine glycan. A helical transmembrane segment spans residues 178-198; it reads TSVVFGFLNFILWAGNIWFVF. Over 199 to 265 the chain is Cytoplasmic; the sequence is KETGWHSSGQ…SGPTSFNNQI (67 aa). The stretch at 210 to 214 is repeat 1; sequence YLSDP. Residues 210 to 242 form a 5 X approximate repeats region; it reads YLSDPMEKHSSSYNQGGYNQDSYGSSGGYSQQA. 2 positions are modified to phosphoserine: Ser-212 and Ser-220. The disordered stretch occupies residues 221–265; the sequence is SYNQGGYNQDSYGSSGGYSQQASLGPTSDEFGQQPSGPTSFNNQI. A run of 4 repeats spans residues 222–226, 227–231, 232–236, and 238–242. The segment covering 224 to 243 has biased composition (low complexity); that stretch reads QGGYNQDSYGSSGGYSQQAS. Over residues 244–265 the composition is skewed to polar residues; the sequence is LGPTSDEFGQQPSGPTSFNNQI.

The protein belongs to the synaptophysin/synaptobrevin family. Central nervous system.

The protein resides in the cytoplasmic vesicle. Its subcellular location is the secretory vesicle. The protein localises to the synaptic vesicle membrane. It is found in the synapse. It localises to the synaptosome. Functionally, intrinsic membrane protein of small synaptic vesicles. Probable vesicular channel protein. The polypeptide is Synaptoporin (Synpr) (Rattus norvegicus (Rat)).